A 500-amino-acid chain; its full sequence is Protein shisa-6 (500 aa).

The first 25 residues, 1–25 (MALRRLLLLLLLSLESLDLLPSVHG), serve as a signal peptide directing secretion. At 26–174 (ARGRAANRTL…NKYDPEKDKT (149 aa)) the chain is on the extracellular side. N-linked (GlcNAc...) asparagine glycans are attached at residues Asn-32 and Asn-59. Residues 52 to 73 (ARGGRELNGTARAPGIPEAGSR) form a disordered region. The helical transmembrane segment at 175–195 (NFTVYITCGVIAFVIVAGVFA) threads the bilayer. Residues 196–500 (KVSYDKAHRP…YTASKTEVTV (305 aa)) lie on the Cytoplasmic side of the membrane. The span at 240-255 (TSPKENTPVRSSSKNH) shows a compositional bias: polar residues. Disordered regions lie at residues 240–269 (TSPK…PEKP) and 349–378 (SQQK…DRGL). Ser-391, Ser-397, and Ser-409 each carry phosphoserine. Thr-433 is modified (phosphothreonine). Positions 444–470 (MHSHPSASNNSYATLGQSQTAAKRHAF) are disordered. The span at 448–464 (PSASNNSYATLGQSQTA) shows a compositional bias: polar residues. Thr-477 is modified (phosphothreonine). Residues 497 to 500 (EVTV) carry the PDZ-binding motif.

Belongs to the shisa family. As to quaternary structure, component of the postsynaptic hippocampal AMPA-type glutamate receptor (AMPAR) complex, at least composed of pore forming AMPAR subunits GRIA1, GRIA2 and GRIA3 and AMPAR auxiliary proteins SHISA6 and SHISA7. Interacts (via PDZ-binding motif) with DLG4/PSD-95 (via PDZ domain); the interaction is direct. In terms of tissue distribution, expressed in the developing ventral mesencephalon.

It localises to the membrane. It is found in the postsynaptic density. Its function is as follows. Involved in maintenance of high-frequency synaptic transmission at hippocampal CA3-CA1 synapses. Regulates AMPA-type glutamate receptor (AMPAR) immobilization at postsynaptic density keeping the channels in an activated state in the presence of glutamate and preventing synaptic depression. May play a role in self-renewal and differentiation of spermatogonial stem cells by inhibiting canonical Wnt signaling pathway. This chain is Protein shisa-6, found in Homo sapiens (Human).